A 226-amino-acid polypeptide reads, in one-letter code: Endonuclease NucS (226 aa).

It belongs to the NucS endonuclease family.

The protein localises to the cytoplasm. In terms of biological role, cleaves both 3' and 5' ssDNA extremities of branched DNA structures. The protein is Endonuclease NucS of Mycobacterium tuberculosis (strain ATCC 25618 / H37Rv).